The chain runs to 402 residues: Argininosuccinate synthase (402 aa).

9–17 (AYSGGLDTS) provides a ligand contact to ATP. Residue tyrosine 86 coordinates L-citrulline. Glycine 116 contacts ATP. The L-aspartate site is built by threonine 118, asparagine 122, and aspartate 123. An L-citrulline-binding site is contributed by asparagine 122. The L-citrulline site is built by arginine 126, serine 174, serine 183, glutamate 259, and tyrosine 271.

This sequence belongs to the argininosuccinate synthase family. Type 1 subfamily. As to quaternary structure, homotetramer.

The protein resides in the cytoplasm. It catalyses the reaction L-citrulline + L-aspartate + ATP = 2-(N(omega)-L-arginino)succinate + AMP + diphosphate + H(+). It participates in amino-acid biosynthesis; L-arginine biosynthesis; L-arginine from L-ornithine and carbamoyl phosphate: step 2/3. The chain is Argininosuccinate synthase from Geobacillus sp. (strain WCH70).